The sequence spans 1230 residues: Cullin-associated NEDD8-dissociated protein 1 (1230 aa).

Alanine 2 bears the N-acetylalanine mark. HEAT repeat units follow at residues alanine 2–isoleucine 39, aspartate 44–glutamate 81, glutamine 83–proline 119, cysteine 131–glutamine 165, asparagine 171–asparagine 208, valine 210–histidine 247, arginine 248–phenylalanine 282, glutamate 289–glutamate 366, glutamate 370–proline 407, proline 424–glycine 467, glutamine 471–proline 510, and proline 515–proline 552. At lysine 55 the chain carries N6-acetyllysine. The disordered stretch occupies residues aspartate 315–aspartate 344. Serine 335 carries the phosphoserine modification. Phosphoserine is present on serine 558. HEAT repeat units lie at residues proline 563–aspartate 602, proline 606–aspartate 643, proline 646–aspartate 683, alanine 688–serine 725, lysine 729–asparagine 768, leucine 770–arginine 808, alanine 809–valine 845, serine 852–proline 889, glutamate 890–proline 927, tyrosine 928–leucine 960, isoleucine 961–glutamine 998, proline 1002–serine 1039, aspartate 1043–leucine 1097, arginine 1099–leucine 1133, and glutamine 1140–alanine 1189. Lysine 971 carries the post-translational modification N6-acetyllysine.

The protein belongs to the CAND family. Interacts with TBP. Part of a complex that contains CUL1 and RBX1. Interacts with unneddylated cullins: interacts with CUL1, CUL2, CUL3, CUL4A, CUL4B and CUL5. Does not bind neddylated CUL1. Interaction with cullins is abolished in presence of COMMD1, which antagonizes with CAND1 for interacting with cullins. Interacts with ERCC6. Interacts with DCUN1D1, DCUN1D2, DCUN1D3, DCUN1D4 and DCUN1D5; these interactions are bridged by cullins and strongly inhibits the neddylation of cullins. Detected in heart, brain, spleen, liver, skeletal muscle, kidney and testis.

It is found in the cytoplasm. The protein resides in the nucleus. In terms of biological role, key assembly factor of SCF (SKP1-CUL1-F-box protein) E3 ubiquitin ligase complexes that promotes the exchange of the substrate-recognition F-box subunit in SCF complexes, thereby playing a key role in the cellular repertoire of SCF complexes. Acts as a F-box protein exchange factor. The exchange activity of CAND1 is coupled with cycles of neddylation conjugation: in the deneddylated state, cullin-binding CAND1 binds CUL1-RBX1, increasing dissociation of the SCF complex and promoting exchange of the F-box protein. Probably plays a similar role in other cullin-RING E3 ubiquitin ligase complexes. May indirectly enhance transcription from various types of promoters. The chain is Cullin-associated NEDD8-dissociated protein 1 (Cand1) from Rattus norvegicus (Rat).